A 263-amino-acid chain; its full sequence is 5'-nucleotidase SurE (263 aa).

Asp-8, Asp-9, Ser-43, and Asn-96 together coordinate a divalent metal cation.

Belongs to the SurE nucleotidase family. Requires a divalent metal cation as cofactor.

The protein resides in the cytoplasm. The enzyme catalyses a ribonucleoside 5'-phosphate + H2O = a ribonucleoside + phosphate. Nucleotidase that shows phosphatase activity on nucleoside 5'-monophosphates. This chain is 5'-nucleotidase SurE, found in Jannaschia sp. (strain CCS1).